We begin with the raw amino-acid sequence, 246 residues long: Acetoacetate decarboxylase (246 aa).

The active-site Schiff-base intermediate with acetoacetate is the Lys-116.

Belongs to the ADC family.

It catalyses the reaction acetoacetate + H(+) = acetone + CO2. Its function is as follows. Catalyzes the conversion of acetoacetate to acetone and carbon dioxide. The sequence is that of Acetoacetate decarboxylase from Burkholderia vietnamiensis (strain G4 / LMG 22486) (Burkholderia cepacia (strain R1808)).